Here is a 298-residue protein sequence, read N- to C-terminus: Small ribosomal subunit protein uS2 (298 aa).

Positions E232–E298 are disordered. A compositionally biased stretch (acidic residues) spans F234 to P250. The segment covering E251 to A276 has biased composition (low complexity).

The protein belongs to the universal ribosomal protein uS2 family.

This chain is Small ribosomal subunit protein uS2, found in Acaryochloris marina (strain MBIC 11017).